The primary structure comprises 175 residues: CDP-archaeol synthase (175 aa).

4 helical membrane passes run 41–61 (GFFVGLIFGALAGLMQMQLLE), 82–102 (TILIFALAVGSLFGDMFMSFF), 122–142 (FVLGALIFAYLASPVWFAEQF), and 147–167 (IAVILIITPLLHLATNVVGYF).

The protein belongs to the CDP-archaeol synthase family. Requires Mg(2+) as cofactor.

The protein localises to the cell membrane. The enzyme catalyses 2,3-bis-O-(geranylgeranyl)-sn-glycerol 1-phosphate + CTP + H(+) = CDP-2,3-bis-O-(geranylgeranyl)-sn-glycerol + diphosphate. Its pathway is membrane lipid metabolism; glycerophospholipid metabolism. Catalyzes the formation of CDP-2,3-bis-(O-geranylgeranyl)-sn-glycerol (CDP-archaeol) from 2,3-bis-(O-geranylgeranyl)-sn-glycerol 1-phosphate (DGGGP) and CTP. This reaction is the third ether-bond-formation step in the biosynthesis of archaeal membrane lipids. In Methanococcoides burtonii (strain DSM 6242 / NBRC 107633 / OCM 468 / ACE-M), this protein is CDP-archaeol synthase.